The chain runs to 115 residues: Small ribosomal subunit protein bS6 (115 aa).

This sequence belongs to the bacterial ribosomal protein bS6 family.

Its function is as follows. Binds together with bS18 to 16S ribosomal RNA. The sequence is that of Small ribosomal subunit protein bS6 from Syntrophotalea carbinolica (strain DSM 2380 / NBRC 103641 / GraBd1) (Pelobacter carbinolicus).